The primary structure comprises 194 residues: Mpv17-like protein (194 aa).

Topologically, residues 1–14 (MASWWRAFPQAARR) are cytoplasmic. A helical membrane pass occupies residues 15-34 (YPWPTNVLLYAGLFSAGDAL). The tract at residues 16–55 (PWPTNVLLYAGLFSAGDALQQRLRGGPADWRQTRRVATLA) is targeting to peroxisomes. Over 35–50 (QQRLRGGPADWRQTRR) the chain is Lumenal. A helical membrane pass occupies residues 51–67 (VATLAVTFHGNFNYVWL). Residues 68-91 (RLLERALPGRAPRTVLAKVLCDQT) lie on the Cytoplasmic side of the membrane. A helical transmembrane segment spans residues 92-110 (VGGPIALSAFYVGMSVLQG). Residues 111–150 (KDDIFLDLKQKFWNTYKSGLMYWPFVQLTNFSLVPVHWRT) are Lumenal-facing. A helical transmembrane segment spans residues 151–168 (AYTGLCAFLWATFLCFSQ). The Cytoplasmic portion of the chain corresponds to 169 to 194 (QSGDGTLQSIFIFLRRKEASDKSPEK).

It belongs to the peroxisomal membrane protein PXMP2/4 family. Isoform 1 and isoform 3 are expressed in the kidney (at protein level). Isoform 1 is expressed in the kidney, spleen, heart, brain, lung and liver. Isoform 3 is expressed in the kidney. Isoform 1 and isoform 3 expression increase during development, reache their highest level in adulthood and decrease with aging.

The protein resides in the peroxisome membrane. Its subcellular location is the cytoplasm. In terms of biological role, participates in reactive oxygen species metabolism by up- or down-regulation of the genes of antioxidant enzymes. Protective against the mitochondrial apoptotic cascade. Participates in reactive oxygen species metabolism by up- or down-regulation of the genes of antioxidant enzymes. In Mus musculus (Mouse), this protein is Mpv17-like protein (Mpv17l).